The primary structure comprises 228 residues: Sensory transduction protein RegX3 (228 aa).

The 114-residue stretch at 3 to 116 folds into the Response regulatory domain; sequence SVLIVEDEES…ELIARIRAVL (114 aa). The residue at position 52 (aspartate 52) is a 4-aspartylphosphate. The segment at residues 129–228 is a DNA-binding region (ompR/PhoB-type); the sequence is DGVLEAGPVR…VRGLGYKLEG (100 aa).

In terms of processing, phosphorylated by SenX3.

Its function is as follows. Member of the two-component regulatory system SenX3/RegX3 involved in stress response. The system is involved in phosphate starvation response. Once phosphorylated by SenX3, activates the expression of the alkaline phosphatase phoA, the high-affinity phosphate transporter pstSCAB, phnDCE, phnF and senX3. May act as a negative regulator of NhaA. Acts by binding to a DNA motif consisting of an inverted repeat. In Mycolicibacterium smegmatis (strain ATCC 700084 / mc(2)155) (Mycobacterium smegmatis), this protein is Sensory transduction protein RegX3.